The primary structure comprises 156 residues: Snaclec A11 (156 aa).

Residues 1-23 form the signal peptide; sequence MGRSISVSFGLLVVFLSLSGTGA. Cystine bridges form between Cys27–Cys38, Cys55–Cys154, and Cys129–Cys146. The region spanning 34-155 is the C-type lectin domain; sequence YDQHCYQAVD…CGQPYRFTCE (122 aa).

It belongs to the snaclec family. As to quaternary structure, heterodimer; disulfide-linked. As to expression, expressed by the venom gland.

The protein resides in the secreted. Its function is as follows. Interferes with one step of hemostasis (modulation of platelet aggregation, or coagulation cascade, for example). The protein is Snaclec A11 of Macrovipera lebetinus (Levantine viper).